The sequence spans 292 residues: UPF0696 protein C11orf68 homolog (292 aa).

Positions 1-10 (MAAAAAAVAG) are enriched in low complexity. The segment at 1 to 60 (MAAAAAAVAGAGRGGGGGAEPRQERSRARGWAGAERSEGRRMEPGEELEEEDSPGGREDG) is disordered. The segment covering 35 to 44 (ERSEGRRMEP) has biased composition (basic and acidic residues).

Belongs to the UPF0696 family.

The sequence is that of UPF0696 protein C11orf68 homolog from Bos taurus (Bovine).